Here is a 123-residue protein sequence, read N- to C-terminus: NADH-quinone oxidoreductase subunit A (123 aa).

3 helical membrane passes run 11–31 (YLPI…IMML), 68–88 (LVAI…PWAI), and 93–113 (IGKI…IGFI).

It belongs to the complex I subunit 3 family. As to quaternary structure, NDH-1 is composed of 14 different subunits. Subunits NuoA, H, J, K, L, M, N constitute the membrane sector of the complex.

The protein localises to the cell inner membrane. The catalysed reaction is a quinone + NADH + 5 H(+)(in) = a quinol + NAD(+) + 4 H(+)(out). NDH-1 shuttles electrons from NADH, via FMN and iron-sulfur (Fe-S) centers, to quinones in the respiratory chain. The immediate electron acceptor for the enzyme in this species is believed to be ubiquinone. Couples the redox reaction to proton translocation (for every two electrons transferred, four hydrogen ions are translocated across the cytoplasmic membrane), and thus conserves the redox energy in a proton gradient. This Rickettsia typhi (strain ATCC VR-144 / Wilmington) protein is NADH-quinone oxidoreductase subunit A.